The primary structure comprises 175 residues: Peptidyl-prolyl cis-trans isomerase B (175 aa).

The region spanning 3–172 (EQLYATLKTN…EDVVIESVVV (170 aa)) is the PPIase cyclophilin-type domain.

It belongs to the cyclophilin-type PPIase family.

The protein localises to the cytoplasm. It catalyses the reaction [protein]-peptidylproline (omega=180) = [protein]-peptidylproline (omega=0). With respect to regulation, inhibited by cyclosporin A (CsA). PPIases accelerate the folding of proteins. It catalyzes the cis-trans isomerization of proline imidic peptide bonds in oligopeptides. This Streptomyces anulatus (Streptomyces chrysomallus) protein is Peptidyl-prolyl cis-trans isomerase B (cypB).